Reading from the N-terminus, the 158-residue chain is Nascent polypeptide-associated complex subunit beta (158 aa).

2 disordered regions span residues 1–40 (MDQA…DKKL) and 119–158 (ESYQ…SKVE). Positions 16–31 (GKGKGTPRRKTKKVHK) are enriched in basic residues. Positions 34-99 (GTDDKKLQTS…GEDKELTELV (66 aa)) constitute an NAC-A/B domain. Acidic residues predominate over residues 137–152 (DDDDDDEIPDLVEGEN).

It belongs to the NAC-beta family. In terms of assembly, part of the nascent polypeptide-associated complex (NAC), consisting of EGD2 and EGD1. NAC associates with ribosomes via EGD1.

The protein resides in the cytoplasm. Its subcellular location is the nucleus. In terms of biological role, component of the nascent polypeptide-associated complex (NAC), a dynamic component of the ribosomal exit tunnel, protecting the emerging polypeptides from interaction with other cytoplasmic proteins to ensure appropriate nascent protein targeting. The NAC complex also promotes mitochondrial protein import by enhancing productive ribosome interactions with the outer mitochondrial membrane and blocks the inappropriate interaction of ribosomes translating non-secretory nascent polypeptides with translocation sites in the membrane of the endoplasmic reticulum. EGD1 may act as a transcription factor that exert a negative effect on the expression of several genes that are transcribed by RNA polymerase II. The polypeptide is Nascent polypeptide-associated complex subunit beta (EGD1) (Ajellomyces capsulatus (strain NAm1 / WU24) (Darling's disease fungus)).